The chain runs to 533 residues: Chromosomal replication initiator protein DnaA (533 aa).

A domain I, interacts with DnaA modulators region spans residues 1 to 72; it reads MNDFWQHCSA…DLARDFWNAP (72 aa). Residues 72-196 form a domain II region; sequence PIEVQFVLDP…EAADSMYERS (125 aa). A disordered region spans residues 83 to 110; that stretch reads AGQRSPAGATPLAPRAPLPSANPAPVGP. Residues 96-110 show a composition bias toward pro residues; that stretch reads PRAPLPSANPAPVGP. Residues 197 to 413 form a domain III, AAA+ region region; sequence KLNPVLTFDN…GALRKILAYS (217 aa). The ATP site is built by glycine 241, glycine 243, lysine 244, and threonine 245. A domain IV, binds dsDNA region spans residues 414–533; it reads KFHGREITIE…LHVLEQTLKG (120 aa).

It belongs to the DnaA family. Oligomerizes as a right-handed, spiral filament on DNA at oriC.

The protein resides in the cytoplasm. Plays an essential role in the initiation and regulation of chromosomal replication. ATP-DnaA binds to the origin of replication (oriC) to initiate formation of the DNA replication initiation complex once per cell cycle. Binds the DnaA box (a 9 base pair repeat at the origin) and separates the double-stranded (ds)DNA. Forms a right-handed helical filament on oriC DNA; dsDNA binds to the exterior of the filament while single-stranded (ss)DNA is stabiized in the filament's interior. The ATP-DnaA-oriC complex binds and stabilizes one strand of the AT-rich DNA unwinding element (DUE), permitting loading of DNA polymerase. After initiation quickly degrades to an ADP-DnaA complex that is not apt for DNA replication. Binds acidic phospholipids. The chain is Chromosomal replication initiator protein DnaA from Burkholderia mallei (strain NCTC 10247).